Consider the following 351-residue polypeptide: MENDNFVVLKNVCKRFGDNTVINNLDLEIKKGSLVTLLGPSGCGKTTVLRLVAGLEKPTSGQIFIDGEDVTNTSIQQRDICMVFQSYALFPHLSLYDNVGYGLKMLKLPAAEIKQRVDDALKLVDLSGMGDRFVDQISGGQQQRIALARALVLKPKVLLFDEPLSNLDANLRRSMRETIRDLQQRFNITSLYVTHDQTEAFAVSDTVIVMKDGEIMQQGSPDDLYKTPSSMFMANFMGDANIFTGRYDDGQLNINGYCIPADPEVVQGKAEGDYQIGVRPEAILLTSEGEPSQQCIVNNVVYMGSMYEVAVTWHDQELLLQLNSSQFDANLSDHAYLTINPTGIFLLPFDA.

One can recognise an ABC transporter domain in the interval 7–237 (VVLKNVCKRF…PSSMFMANFM (231 aa)). 39-46 (GPSGCGKT) provides a ligand contact to ATP.

This sequence belongs to the ABC transporter superfamily. Fe(3+) ion importer (TC 3.A.1.10) family. As to quaternary structure, the complex is composed of two ATP-binding proteins (FbpC), two transmembrane proteins (FbpB) and a solute-binding protein (FbpA).

Its subcellular location is the cell inner membrane. It carries out the reaction Fe(3+)(out) + ATP + H2O = Fe(3+)(in) + ADP + phosphate + H(+). Part of the ABC transporter complex FbpABC involved in Fe(3+) ions import. Responsible for energy coupling to the transport system. The protein is Fe(3+) ions import ATP-binding protein FbpC of Photobacterium profundum (strain SS9).